Here is a 391-residue protein sequence, read N- to C-terminus: Phosphoglycerate kinase (391 aa).

Substrate-binding positions include 21-23, R36, 59-62, R113, and R146; these read DLN and HLGR. ATP-binding positions include K197, E319, and 345-348; that span reads GGDT.

This sequence belongs to the phosphoglycerate kinase family. Monomer.

The protein localises to the cytoplasm. The catalysed reaction is (2R)-3-phosphoglycerate + ATP = (2R)-3-phospho-glyceroyl phosphate + ADP. Its pathway is carbohydrate degradation; glycolysis; pyruvate from D-glyceraldehyde 3-phosphate: step 2/5. The polypeptide is Phosphoglycerate kinase (Colwellia psychrerythraea (strain 34H / ATCC BAA-681) (Vibrio psychroerythus)).